Consider the following 140-residue polypeptide: Desampylase (140 aa).

Residues 13 to 133 (TLIIPQHYLR…WILSEKNKIS (121 aa)) form the MPN domain. Glu-34 functions as the Proton donor/acceptor in the catalytic mechanism. His-88, His-90, and Asp-101 together coordinate Zn(2+). The short motif at 88–101 (HSHIACPPIPSGKD) is the JAMM motif element.

It belongs to the peptidase M67B family. As to quaternary structure, exists in two major states: monomer and homodimer. Both conformational states are catalytically active. Zn(2+) serves as cofactor. Post-translationally, the disulfide bridge probably stabilizes the PfJAMM1 homodimer at the optimal growth temperature of the hyperthermophile.

The enzyme catalyses an N(6)-[small archaeal modifier protein]-[protein]-L-lysine + H2O = a [protein]-L-lysine + a [small archaeal modifier protein].. Its activity is regulated as follows. Inhibited by EDTA in vitro. Functionally, metalloprotease that displays desampylase (DSAMP) activity, cleaving ubiquitin-like small archaeal modifier proteins (SAMP1, SAMP2 and SAMP3) from protein conjugates (isopeptide- and linear-linked). Thus, likely regulates sampylation and the pools of 'free' SAMP available for protein modification. In vitro, is also able to cleave non-physiological ubiquitin (Ub) substrates, such as 'Met1-', 'Lys48-', and 'Lys63'-linked Ub dimers (Ub2), and to remove Ub tags from diverse proteins. The chain is Desampylase from Pyrococcus furiosus (strain ATCC 43587 / DSM 3638 / JCM 8422 / Vc1).